A 118-amino-acid chain; its full sequence is Holo-[acyl-carrier-protein] synthase (118 aa).

Mg(2+) is bound by residues aspartate 5 and glutamate 51.

This sequence belongs to the P-Pant transferase superfamily. AcpS family. The cofactor is Mg(2+).

It localises to the cytoplasm. The catalysed reaction is apo-[ACP] + CoA = holo-[ACP] + adenosine 3',5'-bisphosphate + H(+). In terms of biological role, transfers the 4'-phosphopantetheine moiety from coenzyme A to a Ser of acyl-carrier-protein. The protein is Holo-[acyl-carrier-protein] synthase of Helicobacter pylori (strain P12).